Consider the following 536-residue polypeptide: Xylulose kinase (536 aa).

Substrate-binding residues include His-99, Arg-170, Asp-280, and Asn-281. ATP is bound by residues Trp-355, 441–442, and Asn-445; that span reads GA.

It belongs to the FGGY kinase family. Monomer.

The enzyme catalyses D-xylulose + ATP = D-xylulose 5-phosphate + ADP + H(+). Functionally, phosphorylates D-xylulose to produce D-xylulose 5-phosphate, a molecule that may play an important role in the regulation of glucose metabolism and lipogenesis. This Homo sapiens (Human) protein is Xylulose kinase (XYLB).